Consider the following 545-residue polypeptide: Tetrahydrocannabinolic acid synthase (545 aa).

A signal peptide spans 1–28; the sequence is MNCSAFSFWFVCKIIFFFLSFHIQISIA. Cys37 and Cys99 are disulfide-bonded. N-linked (GlcNAc...) asparagine glycosylation is found at Asn65 and Asn89. The 175-residue stretch at 77-251 folds into the FAD-binding PCMH-type domain; sequence TTPKPLVIVT…AAWKIKLVAV (175 aa). FAD-binding positions include 109–115 and Ser120; that span reads TRSGGHD. Positions 114–176 form a cross-link, 6-(S-cysteinyl)-8alpha-(pros-histidyl)-FAD (His-Cys); sequence HDAEGMSYIS…ENLSFPGGYC (63 aa). Asn168 carries an N-linked (GlcNAc...) asparagine glycan. FAD contacts are provided by residues Cys176, 180–184, Tyr190, Glu236, and Ile241; that span reads GVGGH. Residue His292 coordinates cannabigerolate. N-linked (GlcNAc...) asparagine glycosylation is found at Asn297, Asn305, and Asn329. Cannabigerolate is bound by residues Tyr417 and Glu442. Asn467 carries N-linked (GlcNAc...) asparagine glycosylation. 481–483 is a binding site for FAD; it reads YLN. Tyr484 (proton acceptor) is an active-site residue. N-linked (GlcNAc...) asparagine glycosylation is present at Asn499.

It belongs to the oxygen-dependent FAD-linked oxidoreductase family. In terms of assembly, monomer. FAD is required as a cofactor. Post-translationally, glycosylated when produced in a heterologous system. The deglycosylated THCA synthase has more catalytic activity than the glycosylated form. In terms of processing, the FAD cofactor is bound via a bicovalent 6-S-cysteinyl, 8alpha-N1-histidyl FAD linkage. In terms of tissue distribution, expressed in the secretory cells of glandular trichomes.

It localises to the secreted. Its subcellular location is the extracellular space. The protein resides in the apoplast. The catalysed reaction is cannabigerolate + O2 = Delta(9)-tetrahydrocannabinolate + H2O2. The protein operates within secondary metabolite biosynthesis; terpenoid biosynthesis. Its activity is regulated as follows. Inhibited by Hg(2+). Its function is as follows. Oxidoreductase involved in the biosynthesis of cannabinoids-related terpenophenolic natural products, which have pharmacological activity. Catalyzes the oxidative cyclization of the monoterpene moiety in cannabigerolic acid (CBGA), producing delta(9)-tetrahydrocannabinolate (THCA), the major cannabioid in drug-type Cannabis plants. Can also use cannabinerolic acid as substrate, but not cannabigerol or cannabinerol. The protein is Tetrahydrocannabinolic acid synthase of Cannabis sativa (Hemp).